The following is a 171-amino-acid chain: Large ribosomal subunit protein uL10 (171 aa).

Belongs to the universal ribosomal protein uL10 family. In terms of assembly, part of the ribosomal stalk of the 50S ribosomal subunit. The N-terminus interacts with L11 and the large rRNA to form the base of the stalk. The C-terminus forms an elongated spine to which L12 dimers bind in a sequential fashion forming a multimeric L10(L12)X complex.

Forms part of the ribosomal stalk, playing a central role in the interaction of the ribosome with GTP-bound translation factors. This Corynebacterium efficiens (strain DSM 44549 / YS-314 / AJ 12310 / JCM 11189 / NBRC 100395) protein is Large ribosomal subunit protein uL10.